Here is a 274-residue protein sequence, read N- to C-terminus: 4-hydroxy-3-methylbut-2-enyl diphosphate reductase (274 aa).

Cys-12 is a [4Fe-4S] cluster binding site. 2 residues coordinate (2E)-4-hydroxy-3-methylbut-2-enyl diphosphate: His-36 and His-70. Residues His-36 and His-70 each coordinate dimethylallyl diphosphate. The isopentenyl diphosphate site is built by His-36 and His-70. Residue Cys-92 participates in [4Fe-4S] cluster binding. His-120 serves as a coordination point for (2E)-4-hydroxy-3-methylbut-2-enyl diphosphate. A dimethylallyl diphosphate-binding site is contributed by His-120. His-120 is an isopentenyl diphosphate binding site. Glu-122 (proton donor) is an active-site residue. Residue Thr-158 participates in (2E)-4-hydroxy-3-methylbut-2-enyl diphosphate binding. Residue Cys-186 coordinates [4Fe-4S] cluster. (2E)-4-hydroxy-3-methylbut-2-enyl diphosphate is bound by residues Ser-214, Ser-215, Asn-216, and Ser-258. Dimethylallyl diphosphate-binding residues include Ser-214, Ser-215, Asn-216, and Ser-258. Isopentenyl diphosphate-binding residues include Ser-214, Ser-215, Asn-216, and Ser-258.

The protein belongs to the IspH family. [4Fe-4S] cluster serves as cofactor.

It carries out the reaction isopentenyl diphosphate + 2 oxidized [2Fe-2S]-[ferredoxin] + H2O = (2E)-4-hydroxy-3-methylbut-2-enyl diphosphate + 2 reduced [2Fe-2S]-[ferredoxin] + 2 H(+). The catalysed reaction is dimethylallyl diphosphate + 2 oxidized [2Fe-2S]-[ferredoxin] + H2O = (2E)-4-hydroxy-3-methylbut-2-enyl diphosphate + 2 reduced [2Fe-2S]-[ferredoxin] + 2 H(+). It participates in isoprenoid biosynthesis; dimethylallyl diphosphate biosynthesis; dimethylallyl diphosphate from (2E)-4-hydroxy-3-methylbutenyl diphosphate: step 1/1. The protein operates within isoprenoid biosynthesis; isopentenyl diphosphate biosynthesis via DXP pathway; isopentenyl diphosphate from 1-deoxy-D-xylulose 5-phosphate: step 6/6. In terms of biological role, catalyzes the conversion of 1-hydroxy-2-methyl-2-(E)-butenyl 4-diphosphate (HMBPP) into a mixture of isopentenyl diphosphate (IPP) and dimethylallyl diphosphate (DMAPP). Acts in the terminal step of the DOXP/MEP pathway for isoprenoid precursor biosynthesis. The sequence is that of 4-hydroxy-3-methylbut-2-enyl diphosphate reductase from Helicobacter pylori (strain Shi470).